Consider the following 356-residue polypeptide: S-adenosylmethionine:tRNA ribosyltransferase-isomerase (356 aa).

The protein belongs to the QueA family. Monomer.

The protein localises to the cytoplasm. The catalysed reaction is 7-aminomethyl-7-carbaguanosine(34) in tRNA + S-adenosyl-L-methionine = epoxyqueuosine(34) in tRNA + adenine + L-methionine + 2 H(+). Its pathway is tRNA modification; tRNA-queuosine biosynthesis. Functionally, transfers and isomerizes the ribose moiety from AdoMet to the 7-aminomethyl group of 7-deazaguanine (preQ1-tRNA) to give epoxyqueuosine (oQ-tRNA). The polypeptide is S-adenosylmethionine:tRNA ribosyltransferase-isomerase (Escherichia coli (strain 55989 / EAEC)).